A 391-amino-acid chain; its full sequence is 3-ketoacyl-CoA thiolase (391 aa).

C95 serves as the catalytic Acyl-thioester intermediate. Residues H347 and C377 each act as proton acceptor in the active site.

The protein belongs to the thiolase-like superfamily. Thiolase family. In terms of assembly, heterotetramer of two alpha chains (FadB) and two beta chains (FadA).

Its subcellular location is the cytoplasm. It catalyses the reaction an acyl-CoA + acetyl-CoA = a 3-oxoacyl-CoA + CoA. Its pathway is lipid metabolism; fatty acid beta-oxidation. Functionally, catalyzes the final step of fatty acid oxidation in which acetyl-CoA is released and the CoA ester of a fatty acid two carbons shorter is formed. The polypeptide is 3-ketoacyl-CoA thiolase (Pseudomonas fluorescens (strain ATCC BAA-477 / NRRL B-23932 / Pf-5)).